Here is a 553-residue protein sequence, read N- to C-terminus: Chaperonin GroEL 2 (553 aa).

ATP contacts are provided by residues 29-32 (TLGP), 86-90 (DGTTT), Gly414, and Asp495.

The protein belongs to the chaperonin (HSP60) family. Forms a cylinder of 14 subunits composed of two heptameric rings stacked back-to-back. Interacts with the co-chaperonin GroES.

The protein localises to the cytoplasm. It carries out the reaction ATP + H2O + a folded polypeptide = ADP + phosphate + an unfolded polypeptide.. Its function is as follows. Together with its co-chaperonin GroES, plays an essential role in assisting protein folding. The GroEL-GroES system forms a nano-cage that allows encapsulation of the non-native substrate proteins and provides a physical environment optimized to promote and accelerate protein folding. The protein is Chaperonin GroEL 2 of Gloeobacter violaceus (strain ATCC 29082 / PCC 7421).